Consider the following 77-residue polypeptide: Large ribosomal subunit protein uL29 (77 aa).

Belongs to the universal ribosomal protein uL29 family.

This chain is Large ribosomal subunit protein uL29, found in Cutibacterium acnes (strain DSM 16379 / KPA171202) (Propionibacterium acnes).